Reading from the N-terminus, the 109-residue chain is Class I hydrophobin 7 (109 aa).

The first 17 residues, 1-17, serve as a signal peptide directing secretion; the sequence is MFAQSFIITALAALAVA. 4 cysteine pairs are disulfide-bonded: C28–C88, C35–C82, C36–C69, and C89–C102.

Belongs to the fungal hydrophobin family. As to quaternary structure, self-assembles to form functional amyloid fibrils called rodlets. Self-assembly into fibrillar rodlets occurs spontaneously at hydrophobic:hydrophilic interfaces and the rodlets further associate laterally to form amphipathic monolayers.

Its subcellular location is the secreted. It is found in the cell wall. Aerial growth, conidiation, and dispersal of filamentous fungi in the environment rely upon a capability of their secreting small amphipathic proteins called hydrophobins (HPBs) with low sequence identity. Class I can self-assemble into an outermost layer of rodlet bundles on aerial cell surfaces, conferring cellular hydrophobicity that supports fungal growth, development and dispersal; whereas Class II form highly ordered films at water-air interfaces through intermolecular interactions but contribute nothing to the rodlet structure. Hydph7 is a class I hydrophobin involved in fruiting body development. In Pleurotus ostreatus (strain PC15) (Oyster mushroom), this protein is Class I hydrophobin 7.